The chain runs to 389 residues: tRNA(Met) cytidine acetate ligase (389 aa).

ATP is bound by residues 8-21, Gly97, Asn153, and Arg176; that span reads IAEF…HEYL.

The protein belongs to the TmcAL family.

Its subcellular location is the cytoplasm. It catalyses the reaction cytidine(34) in elongator tRNA(Met) + acetate + ATP = N(4)-acetylcytidine(34) in elongator tRNA(Met) + AMP + diphosphate. Catalyzes the formation of N(4)-acetylcytidine (ac(4)C) at the wobble position of elongator tRNA(Met), using acetate and ATP as substrates. First activates an acetate ion to form acetyladenylate (Ac-AMP) and then transfers the acetyl group to tRNA to form ac(4)C34. The sequence is that of tRNA(Met) cytidine acetate ligase from Lactococcus lactis subsp. cremoris (strain SK11).